The sequence spans 565 residues: Proline--tRNA ligase (565 aa).

This sequence belongs to the class-II aminoacyl-tRNA synthetase family. ProS type 1 subfamily. Homodimer.

The protein localises to the cytoplasm. It catalyses the reaction tRNA(Pro) + L-proline + ATP = L-prolyl-tRNA(Pro) + AMP + diphosphate. Catalyzes the attachment of proline to tRNA(Pro) in a two-step reaction: proline is first activated by ATP to form Pro-AMP and then transferred to the acceptor end of tRNA(Pro). As ProRS can inadvertently accommodate and process non-cognate amino acids such as alanine and cysteine, to avoid such errors it has two additional distinct editing activities against alanine. One activity is designated as 'pretransfer' editing and involves the tRNA(Pro)-independent hydrolysis of activated Ala-AMP. The other activity is designated 'posttransfer' editing and involves deacylation of mischarged Ala-tRNA(Pro). The misacylated Cys-tRNA(Pro) is not edited by ProRS. The polypeptide is Proline--tRNA ligase (Francisella tularensis subsp. tularensis (strain FSC 198)).